The primary structure comprises 513 residues: Cytochrome P450 monooxygenase CYP3 (513 aa).

Residues 1–21 (MLPRSLGHSTSELSPPFDGPN) form a disordered region. Position 451 (Cys-451) interacts with heme.

Belongs to the cytochrome P450 family. It depends on heme as a cofactor.

It functions in the pathway secondary metabolite biosynthesis. Functionally, cytochrome P450 monooxygenase; part of the gene cluster that mediates the biosynthesis of a tyrosine-derived cytochalasan acting as a fungal signal recognized by resistant rice plants and leads to avirulence in Pi33 resistant rice cultivars. The first step in the pathway is catalyzed by the hybrid PKS-NRPS ACE1, assisted by the enoyl reductase RAP1, that are responsible for fusion of the tyrosine precursor and the polyketide backbone. The polyketide synthase module (PKS) of ACE1 is responsible for the synthesis of the polyketide backbone and the downstream nonribosomal peptide synthetase (NRPS) amidates the carboxyl end of the polyketide with the tyrosine precursor. Because ACE1 lacks a designated enoylreductase (ER) domain, the required activity is provided the enoyl reductase RAP1. Reduction by the hydrolyase ORFZ, followed by dehydration and intra-molecular Diels-Alder cyclization by the Diels-Alderase ORF3 then yield the required isoindolone-fused macrocycle. A number of oxidative steps catalyzed by the tailoring enzymes identified within the cluster, including cytochrome P450 monooxygenases CYP1 to CYP4, the FAD-linked oxidoreductase OXR2 and the short-chain dehydrogenase/reductase OXR1, are further required to afford the final cytochalasans that confer avirulence and which have still to be identified. The monooxygenase CYP1 has been shown to be a site-selective C-18 hydroxylase whereas the function of CYP3 is the site-selective epoxidation of the C-6/C-7 olefin that is present in some intermediate compounds. Finally, SYN2 and RAP2 are not required for avirulence in Pi33 resistant rice cultivars. In Pyricularia oryzae (strain 70-15 / ATCC MYA-4617 / FGSC 8958) (Rice blast fungus), this protein is Cytochrome P450 monooxygenase CYP3.